A 688-amino-acid polypeptide reads, in one-letter code: Collagen alpha-2(IX) chain (688 aa).

Residues 1–22 form the signal peptide; it reads MTAVPAPRSLFVLLQVLWLALA. Residues 26–162 form a triple-helical region 4 (COL4) region; the sequence is GPPGEPGPPG…PGKPGRPGTI (137 aa). The disordered stretch occupies residues 26 to 171; it reads GPPGEPGPPG…IQGLEGSADF (146 aa). 2 stretches are compositionally biased toward pro residues: residues 28 to 42 and 105 to 126; these read PGEP…PPGV and LPGP…PGPV. Positions 128–137 are enriched in low complexity; sequence LPGEIGTPGP. Residues 138–156 are compositionally biased toward pro residues; it reads KGDPGPEGPSGPPGPPGKP. The residue at position 159 (Pro159) is a 4-hydroxyproline. Residues 163–179 are nonhelical region 4 (NC4); it reads QGLEGSADFLCPTNCPA. An O-linked (Xyl...) (glycosaminoglycan) serine glycan is attached at Ser168. Residues 180 to 518 form a triple-helical region 3 (COL3) region; that stretch reads GVKGPQGLQG…PGRQGVVGRA (339 aa). 5-hydroxylysine is present on Lys182. O-linked (Gal...) hydroxylysine glycosylation is present at Lys182. Residues 183 to 517 are disordered; the sequence is GPQGLQGVKG…QPGRQGVVGR (335 aa). 2 stretches are compositionally biased toward low complexity: residues 289 to 314 and 392 to 412; these read PQGI…PGIP and RGPV…EQGP. Residues 435-444 are compositionally biased toward gly residues; it reads GPRGGVGDPG. Over residues 502–517 the composition is skewed to low complexity; the sequence is DRGVPGQPGRQGVVGR. Residues 519-548 form a nonhelical region 3 (NC3) region; it reads ASDQHIVDVVLKMIQEQLAEVAVSAKREAL. Positions 549–631 are triple-helical region 2 (COL2); it reads GAAGMVGLPG…PGLPGRPGQA (83 aa). The disordered stretch occupies residues 553 to 664; the sequence is MVGLPGPPGP…GPVGLPGFCE (112 aa). Basic and acidic residues predominate over residues 598–610; it reads KRGEKGDRGEMGH. The tract at residues 632 to 633 is nonhelical region 2 (NC2); sequence IN. Residues 634-663 are triple-helical region 1 (COL1); the sequence is GKDGDRGSPGAPGEAGRPGRPGPVGLPGFC. Positions 664–688 are nonhelical region 1 (NC1); sequence EPAACLGASAYTSARLTEPGSIKGP.

This sequence belongs to the fibril-associated collagens with interrupted helices (FACIT) family. As to quaternary structure, heterotrimer of an alpha 1(IX), an alpha 2(IX) and an alpha 3(IX) chain. The chains are linked to each other by interchain disulfide bonds. Trimers are also cross-linked via hydroxylysines. Post-translationally, covalently linked to the telopeptides of type II collagen by lysine-derived cross-links. Prolines at the third position of the tripeptide repeating unit (G-X-Y) are hydroxylated in some or all of the chains.

It localises to the secreted. Its subcellular location is the extracellular space. The protein localises to the extracellular matrix. Functionally, structural component of hyaline cartilage and vitreous of the eye. This Mus musculus (Mouse) protein is Collagen alpha-2(IX) chain (Col9a2).